Reading from the N-terminus, the 451-residue chain is MKVIRDSIHKDIYLDEKELEIIDSEEFQRLRNIKQTGLTYLVYPSANHTRFEHSLGTMFIASKIAEKINADVELTRVSALLHDIGHPPFSHTLEICGYSHEVFGRKKIKHMNLDNFSKSEIIKTLNRKNLEGKIISGDVDADRMDYLLRDSYHTGTAYGMIDLPRILRSITTFESFGKVKIGILKKGIQAIESLLVARHQMYSAVYMHPTVRIADTMIKRAVIKEIQEKNLDIKDLANMDDIALVSFLRISENYLMERIDRRNLYKNLITYSYFDLNPIEKWIFVNLDEKQILSLESRFYEEFGWDIFIDIYPIPKMEEHNVYIISDEGVKRLDEVSPLAQSLKPSEMRLWNISIYAPKEKIKELRENNVKDRINKILKELDVKVESKLIDILKEYGTITGKRRFLEIAKERGISPKEFYNELHKLIFCGLIKERFNRRTYVYCLNNFVKL.

An HD domain is found at 50-147; it reads RFEHSLGTMF…DVDADRMDYL (98 aa).

This is an uncharacterized protein from Methanocaldococcus jannaschii (strain ATCC 43067 / DSM 2661 / JAL-1 / JCM 10045 / NBRC 100440) (Methanococcus jannaschii).